We begin with the raw amino-acid sequence, 149 residues long: MIDKLIEIIRPVVESLGYEFYHIEIVKEDGERYLRVYIDKENGISLDDCEKVSRAISDLLDEKDPIPYSYYLEVSSPGIYRTLFTEEHLKKYIGNTVDIKLKSSLEKSTNYSGKLIDVNEEDIVIVVSDNREFKIPRKKIKKICLSGEF.

This sequence belongs to the RimP family.

It localises to the cytoplasm. Its function is as follows. Required for maturation of 30S ribosomal subunits. This chain is Ribosome maturation factor RimP, found in Clostridium acetobutylicum (strain ATCC 824 / DSM 792 / JCM 1419 / IAM 19013 / LMG 5710 / NBRC 13948 / NRRL B-527 / VKM B-1787 / 2291 / W).